The primary structure comprises 294 residues: GTPase Era (294 aa).

The 170-residue stretch at 2–171 (NSGVVTIIGR…LSLLIELLPE (170 aa)) folds into the Era-type G domain. The tract at residues 10 to 17 (GRPSAGKS) is G1. 10 to 17 (GRPSAGKS) contacts GTP. The interval 36–40 (QTTRN) is G2. The segment at 57–60 (DTPG) is G3. Residues 57–61 (DTPGY) and 119–122 (NKAD) contribute to the GTP site. The tract at residues 119-122 (NKAD) is G4. The segment at 150 to 152 (ISA) is G5. The region spanning 202–280 (TREEIPHALY…QLDLQVRVNK (79 aa)) is the KH type-2 domain.

Belongs to the TRAFAC class TrmE-Era-EngA-EngB-Septin-like GTPase superfamily. Era GTPase family. Monomer.

It is found in the cytoplasm. The protein localises to the cell inner membrane. Its function is as follows. An essential GTPase that binds both GDP and GTP, with rapid nucleotide exchange. Plays a role in 16S rRNA processing and 30S ribosomal subunit biogenesis and possibly also in cell cycle regulation and energy metabolism. This is GTPase Era from Treponema denticola (strain ATCC 35405 / DSM 14222 / CIP 103919 / JCM 8153 / KCTC 15104).